The sequence spans 334 residues: Biotin synthase (334 aa).

One can recognise a Radical SAM core domain in the interval 54 to 281 (QAIQLSTLLS…KSYVRLSAGR (228 aa)). Cys-69, Cys-73, and Cys-76 together coordinate [4Fe-4S] cluster. Residues Cys-113, Cys-144, Cys-204, and Arg-276 each coordinate [2Fe-2S] cluster.

It belongs to the radical SAM superfamily. Biotin synthase family. Homodimer. It depends on [4Fe-4S] cluster as a cofactor. [2Fe-2S] cluster serves as cofactor.

The enzyme catalyses (4R,5S)-dethiobiotin + (sulfur carrier)-SH + 2 reduced [2Fe-2S]-[ferredoxin] + 2 S-adenosyl-L-methionine = (sulfur carrier)-H + biotin + 2 5'-deoxyadenosine + 2 L-methionine + 2 oxidized [2Fe-2S]-[ferredoxin]. Its pathway is cofactor biosynthesis; biotin biosynthesis; biotin from 7,8-diaminononanoate: step 2/2. Functionally, catalyzes the conversion of dethiobiotin (DTB) to biotin by the insertion of a sulfur atom into dethiobiotin via a radical-based mechanism. The chain is Biotin synthase from Haemophilus ducreyi (strain 35000HP / ATCC 700724).